A 424-amino-acid chain; its full sequence is MGANVSQLEREIGSDLFPPNEHYFGLVNFGNTCYSNSVLQALYFCKPFREKVLEYKAKNKRPKETLLSCLADLFYSIATQKKKVGSIAPKKFITRLRKEKEEFDNYMQQDAHEFLNFLINHINEIILAERNAGPSNGNPKATNQGGSTSAMASSIASKSSSTSNSNSNSNSTTNSNGNSSNSTGSLNANTSVLDASGSLTATTTPIISGNGTGTNGANSEPTWVHEIFQGILTSETRCLNCETVSSKDENFFDLQVDVDQNTSITHCLRCFSNTETLCSDNKFKCDNCCSYQEAQKRMRVKKLPMILALHLKRFKYMEQFNRHIKVSHRVVFPLELRLFNTSDDAVNPDRLYDLTAVVIHCGSGPNRGHYISIVKSHGLWLLFDDDMVDKIEASTIEDFYGLTSDIHKSSETGYILFYQSRDCA.

Residues 24 to 421 (FGLVNFGNTC…TGYILFYQSR (398 aa)) enclose the USP domain. Catalysis depends on Cys33, which acts as the Nucleophile. A disordered region spans residues 131-189 (NAGPSNGNPKATNQGGSTSAMASSIASKSSSTSNSNSNSNSTTNSNGNSSNSTGSLNAN). Residues 133–144 (GPSNGNPKATNQ) are compositionally biased toward polar residues. The span at 145–189 (GGSTSAMASSIASKSSSTSNSNSNSNSTTNSNGNSSNSTGSLNAN) shows a compositional bias: low complexity. The active-site Proton acceptor is His369.

Belongs to the peptidase C19 family. In terms of assembly, catalytic component of the Usp12-46 deubiquitylase complex consisting of Usp12-46, Wdr20 and Uaf1. The Usp12-46 deubiquitylase complex associates with arr/arrow; the interaction leads to deubiquitination and stabilization of arr/arrow.

It carries out the reaction Thiol-dependent hydrolysis of ester, thioester, amide, peptide and isopeptide bonds formed by the C-terminal Gly of ubiquitin (a 76-residue protein attached to proteins as an intracellular targeting signal).. Functionally, catalytic component of the Usp12-46 deubiquitylase complex. Deubiquitylates the wg/wingless-signaling receptor arr/arrow, which stabilizes the receptor and increases its concentration at the cell surface; this enhances the sensitivity of cells to wg/wingless-signal stimulation. This increases the amplitude and spatial range of the signaling response to the wg/wingless morphogen gradient, facilitating the precise, concentration-dependent regulation of its target genes. Required for wg/wingless-mediated signaling in the wing imaginal disc and for wg/wingless-dependent regulation of adult intestinal stem cell proliferation. Negative regulator of Notch signaling, possibly by regulating lysosomal degradation of N/Notch and affecting cell surface receptor levels; this may be context and cell-type specific function involved in external sensory organ development but not in wing imaginal-disc dorsoventral boundary signaling. Protects against HTT/huntingtin-induced polyglutamine expansion-dependent neurodegeneration. The chain is Ubiquitin carboxyl-terminal hydrolase 12/46 homolog from Drosophila melanogaster (Fruit fly).